The following is a 579-amino-acid chain: Peptidyl-prolyl cis-trans isomerase-like 2 (579 aa).

Residues 42–115 enclose the U-box domain; that stretch reads RRLPFNFCSL…GEYVDPVTYK (74 aa). The interval 227–261 is disordered; that stretch reads AERAQRAESGAASKGLTKPGMSATAASQKTVSHQA. Positions 250-259 are enriched in polar residues; the sequence is TAASQKTVSH. Residues 311 to 470 enclose the PPIase cyclophilin-type domain; sequence QKGYARISTT…PDIRIKDVTI (160 aa). Positions 555–579 are disordered; the sequence is EGPEPEPAKKKFKGGGGFGDFSSWD.

This sequence belongs to the cyclophilin-type PPIase family. PPIL2 subfamily.

The protein localises to the nucleus. It carries out the reaction [protein]-peptidylproline (omega=180) = [protein]-peptidylproline (omega=0). The enzyme catalyses S-ubiquitinyl-[E2 ubiquitin-conjugating enzyme]-L-cysteine + [acceptor protein]-L-lysine = [E2 ubiquitin-conjugating enzyme]-L-cysteine + N(6)-ubiquitinyl-[acceptor protein]-L-lysine.. It participates in protein modification; protein ubiquitination. Functionally, may catalyze the cis-trans isomerization of proline imidic peptide bonds in oligopeptides thereby assisting the folding of proteins. May also function as a chaperone, playing a role in intracellular transport of proteins. May also have a protein ubiquitin ligase activity acting as an E3 ubiquitin protein ligase or as a ubiquitin-ubiquitin ligase promoting elongation of ubiquitin chains on proteins. The chain is Peptidyl-prolyl cis-trans isomerase-like 2 (cyp8) from Aspergillus fumigatus (strain ATCC MYA-4609 / CBS 101355 / FGSC A1100 / Af293) (Neosartorya fumigata).